The chain runs to 482 residues: Histone deacetylase 1 (482 aa).

The tract at residues 9-321 (RKVCYYYDGD…WTYETAVALD (313 aa)) is histone deacetylase. 2 residues coordinate 1D-myo-inositol 1,4,5,6-tetrakisphosphate: Gly27 and Lys31. An N6-acetyllysine; alternate modification is found at Lys74. Lys74 is covalently cross-linked (Glycyl lysine isopeptide (Lys-Gly) (interchain with G-Cter in SUMO2); alternate). The active site involves His141. Asp176 and His178 together coordinate Zn(2+). Position 220 is an N6-acetyllysine (Lys220). An S-nitrosocysteine modification is found at Cys261. Position 264 (Asp264) interacts with Zn(2+). Residue Arg270 coordinates 1D-myo-inositol 1,4,5,6-tetrakisphosphate. At Cys273 the chain carries S-nitrosocysteine. Residues 390-400 (PEESGDEDEED) show a composition bias toward acidic residues. The interval 390–482 (PEESGDEDEE…KGVKEEVKMA (93 aa)) is disordered. Ser393, Ser406, Ser409, Ser421, and Ser423 each carry phosphoserine. A compositionally biased stretch (basic and acidic residues) spans 401–416 (PDKRISICSSDKRIAC). The segment covering 417 to 427 (EEEFSDSDEEG) has biased composition (acidic residues). At Lys432 the chain carries N6-methylated lysine; by EHMT2. Lys438 participates in a covalent cross-link: Glycyl lysine isopeptide (Lys-Gly) (interchain with G-Cter in SUMO2). Residues 443–482 (VKTEDEKEKDPEEKKEVTEEEKTKEEKPEAKGVKEEVKMA) show a composition bias toward basic and acidic residues. Residue Lys444 forms a Glycyl lysine isopeptide (Lys-Gly) (interchain with G-Cter in SUMO2); alternate linkage. Lys444 participates in a covalent cross-link: Glycyl lysine isopeptide (Lys-Gly) (interchain with G-Cter in SUMO); alternate. Glycyl lysine isopeptide (Lys-Gly) (interchain with G-Cter in SUMO2) cross-links involve residues Lys456, Lys457, and Lys473. A Glycyl lysine isopeptide (Lys-Gly) (interchain with G-Cter in SUMO2); alternate cross-link involves residue Lys476. Lys476 participates in a covalent cross-link: Glycyl lysine isopeptide (Lys-Gly) (interchain with G-Cter in SUMO); alternate. Lys480 is covalently cross-linked (Glycyl lysine isopeptide (Lys-Gly) (interchain with G-Cter in SUMO2)).

Belongs to the histone deacetylase family. HD type 1 subfamily. In terms of assembly, part of the core histone deacetylase (HDAC) complex composed of HDAC1, HDAC2, RBBP4 and RBBP7, the core complex associates with SIN3, SAP18 and SAP30 to form the SIN3 HDAC complex. Component of the nucleosome remodeling and deacetylase (NuRD) repressor complex, composed of core proteins MTA1, MTA2, MTA3, RBBP4, RBBP7, HDAC1, HDAC2, MBD2, MBD3, and peripherally associated proteins CDK2AP1, CDK2AP2, GATAD2A, GATAD2B, CHD3, CHD4 and CHD5. The exact stoichiometry of the NuRD complex is unknown, and some subunits such as MBD2 and MBD3, GATAD2A and GATAD2B, and CHD3, CHD4 and CHD5 define mutually exclusive NuRD complexes. Component of a BHC histone deacetylase complex that contains HDAC1, HDAC2, HMG20B/BRAF35, KDM1A, RCOR1/CoREST and PHF21A/BHC80. The BHC complex may also contain ZMYM2, ZNF217, ZMYM3, GSE1 and GTF2I. Component of a mSin3A corepressor complex that contains SIN3A, SAP130, SUDS3/SAP45, ARID4B/SAP180, HDAC1 and HDAC2. Found in a trimeric complex with APBB1 and TSHZ3; the interaction between HDAC1 and APBB1 is mediated by TSHZ3. Forms a complex comprising APPL1, RUVBL2, APPL2, CTNNB1 and HDAC2. Component of a RCOR/GFI/KDM1A/HDAC complex. Part of a complex composed of TRIM28, HDAC1, HDAC2 and EHMT2. Part of a complex containing at least CDYL, MIER1, MIER2, HDAC1 and HDAC2. The large PER complex involved in the histone deacetylation is composed of at least HDAC1, PER2, SFPQ and SIN3A. Associates with the 9-1-1 complex; interacts with HUS1. Found in a complex with DNMT3A and HDAC7. Found in a complex with YY1, SIN3A and GON4L. Identified in a histone deacetylase complex that contains DNTTIP1, HDAC1 and MIDEAS; this complex assembles into a tetramer that contains four copies of each protein chain. Found in a complex composed of at least SINHCAF, SIN3A, HDAC1, SAP30, RBBP4, OGT and TET1. Component of the SIN3B complex, which includes SIN3B, HDAC1, PHF12 and MORF4L1. Interacts with GFI1; the interaction is direct. Interacts directly with GFI1B. Interacts with TSHZ3 (via N-terminus); the interaction is direct. Interacts with APEX1; the interaction is not dependent on the acetylated status of APEX1. Interacts with BANP. Interacts with BAZ2A/TIP5. Interacts with BCL6. Interacts with BCOR. Interacts with BHLHE40/DEC1. Interacts with BRCC3; this interaction is enhanced in the presence of PWWP2B. Interacts with BRMS1. Interacts with BRMS1L. Interacts with C10orf90/FATS (via its N-terminal); the interaction prevents binding of HDAC1 to CDKN1A/p21 and facilitates the acetylation and stabilization of CDKN1A/p21. Interacts with CBFA2T3. Interacts with CCAR2. Interacts with CDK2AP1. Interacts with CHD3. Interacts with CHD4. Interacts with CHFR. Interacts with CIART. Interacts with CDKN1A/p21. Interacts with CDK5 complexed to CDK5R1 (p25). Interacts with CRY1. Interacts with DAXX. Interacts with DDIT3/CHOP. Interacts with DDX5. Interacts with DHX36; this interaction occurs in a RNA-dependent manner. Interacts with DNMT1. Interacts with DNTTIP1. Interacts with E4F1. Interacts with EP300. Interacts with ERCC6. Interacts with GATAD2A. Interacts with HCFC1. Interacts with HDAC9. Interacts with HUS1. Interacts with INSM1. Interacts with KDM4A. Interacts with KDM5A; this interaction impairs histone deacetylation. Interacts with KDM5B. Interacts with KLF1. Interacts with MBD3L2. Interacts with MIER1. Interacts with NFE4. Interacts with NR4A2/NURR1. Interacts with NR1D2 (via C-terminus). Interacts with NRIP1. Interacts with NSD2. Interacts with PACS2. Interacts with PHB2. Interacts with PPHLN1. Interacts with PRDM6. Interacts with PRDM16. Interacts with PWWP2A in a MTA1-dependent manner. Interacts with PWWP2B. Interacts with RB1. Interacts with RERE. Interacts with SANBR (via the BTB domain). Interacts with SAMSN1. Interacts with SAP30L. Interacts with SETDB1. Interacts with SIN3A. Interacts with SMAD3. Interacts with SMAD4; positively regulated by ZBTB7A. Interacts with SMARCAD1. Interacts with SMARCA4/BRG1. Interacts with SMYD2. Interacts with SMYD4 (via MYND-type zinc finger). Interacts with SP1; the interaction deacetylates SP1 and regulates its transcriptional activity. Interacts with SP3; the interaction deacetylates SP3 and regulates its transcriptional activity. In vitro, C(18) ceramides increase this interaction and the subsequent SP3 deacetylation and SP3-mediated repression of the TERT promoter. Interacts with SPEN/MINT. Interacts with SPHK2. Interacts with SUV39H1. Interacts with TGIF. Interacts with TGIF2. Interacts with TRAF6. Interacts with TRIM28; the interaction recruits HDAC1 to E2F1 and inhibits its acetylation. Interacts with TSC22D3 isoform 1; this interaction affects HDAC1 activity on MYOG promoter and thus inhibits MYOD1 transcriptional activity. Interacts with UHRF1. Interacts with UHRF2. Interacts with ZBTB7A. Interacts with ZMYND8. Interacts with ZMYND15. Interacts with ZNF431. Interacts with ZNF516; this interaction is enhanced in the presence of PWWP2B. Interacts with ZNF541. Interacts with ZNF638. Interacts with ZNHIT1. Interacts with the non-histone region of MACROH2A1. Identified in a complex with HDAC2, KCTD19, DNTTIP1 and ZNF541. Interacts with MSX3. Interacts with VRK1. The cofactor is Zn(2+). Post-translationally, sumoylated on Lys-444 and Lys-476; which promotes enzymatic activity. Desumoylated by SENP1. In terms of processing, phosphorylation on Ser-421 and Ser-423 promotes enzymatic activity and interactions with NuRD and SIN3 complexes. Phosphorylated by CDK5. Ubiquitinated by CHFR and KCTD11, leading to its degradation by the proteasome.

Its subcellular location is the nucleus. The catalysed reaction is N(6)-acetyl-L-lysyl-[histone] + H2O = L-lysyl-[histone] + acetate. It catalyses the reaction N(6)-acetyl-L-lysyl-[protein] + H2O = L-lysyl-[protein] + acetate. It carries out the reaction N(6)-(2E)-butenoyl-L-lysyl-[protein] + H2O = (2E)-2-butenoate + L-lysyl-[protein]. The enzyme catalyses N(6)-[(S)-lactoyl]-L-lysyl-[protein] + H2O = (S)-lactate + L-lysyl-[protein]. With respect to regulation, inositol tetraphosphate (1D-myo-inositol 1,4,5,6-tetrakisphosphate) may act as an intermolecular glue between HDAC1 and N-Cor repressor complex components. Histone deacetylase that catalyzes the deacetylation of lysine residues on the N-terminal part of the core histones (H2A, H2B, H3 and H4). Histone deacetylation gives a tag for epigenetic repression and plays an important role in transcriptional regulation, cell cycle progression and developmental events. Histone deacetylases act via the formation of large multiprotein complexes. Acts as a component of the histone deacetylase NuRD complex which participates in the remodeling of chromatin. As part of the SIN3B complex is recruited downstream of the constitutively active genes transcriptional start sites through interaction with histones and mitigates histone acetylation and RNA polymerase II progression within transcribed regions contributing to the regulation of transcription. Also functions as a deacetylase for non-histone targets, such as NR1D2, RELA, SP1, SP3, STAT3 and TSHZ3. Deacetylates SP proteins, SP1 and SP3, and regulates their function. Component of the BRG1-RB1-HDAC1 complex, which negatively regulates the CREST-mediated transcription in resting neurons. Upon calcium stimulation, HDAC1 is released from the complex and CREBBP is recruited, which facilitates transcriptional activation. Deacetylates TSHZ3 and regulates its transcriptional repressor activity. Deacetylates 'Lys-310' in RELA and thereby inhibits the transcriptional activity of NF-kappa-B. Deacetylates NR1D2 and abrogates the effect of KAT5-mediated relieving of NR1D2 transcription repression activity. Component of a RCOR/GFI/KDM1A/HDAC complex that suppresses, via histone deacetylase (HDAC) recruitment, a number of genes implicated in multilineage blood cell development. Involved in CIART-mediated transcriptional repression of the circadian transcriptional activator: CLOCK-BMAL1 heterodimer. Required for the transcriptional repression of circadian target genes, such as PER1, mediated by the large PER complex or CRY1 through histone deacetylation. In addition to protein deacetylase activity, also has protein-lysine deacylase activity: acts as a protein decrotonylase and delactylase by mediating decrotonylation ((2E)-butenoyl) and delactylation (lactoyl) of histones, respectively. This chain is Histone deacetylase 1 (Hdac1), found in Rattus norvegicus (Rat).